The sequence spans 157 residues: 17.8 kDa class I heat shock protein (157 aa).

The 115-residue stretch at 43-157 (ETAAFVNTHI…PEVKAIDISG (115 aa)) folds into the sHSP domain.

Belongs to the small heat shock protein (HSP20) family. As to quaternary structure, forms oligomeric structures.

Its subcellular location is the cytoplasm. The sequence is that of 17.8 kDa class I heat shock protein from Daucus carota (Wild carrot).